The sequence spans 787 residues: LPS-assembly protein LptD (787 aa).

Positions 1–39 (MPRKTLLPLVPACDAAPRRKRLAAALLAVPGLVPAVSQA) are cleaved as a signal peptide.

It belongs to the LptD family. Component of the lipopolysaccharide transport and assembly complex. Interacts with LptE and LptA.

It localises to the cell outer membrane. Together with LptE, is involved in the assembly of lipopolysaccharide (LPS) at the surface of the outer membrane. The polypeptide is LPS-assembly protein LptD (Burkholderia thailandensis (strain ATCC 700388 / DSM 13276 / CCUG 48851 / CIP 106301 / E264)).